We begin with the raw amino-acid sequence, 206 residues long: Ras-related protein Ral-A (206 aa).

GTP is bound by residues 24-29, 40-46, and 127-130; these read GVGKSA, VEDYEPT, and NKSD. Residues 43-51 carry the Effector region motif; sequence YEPTKADSY. Residue Thr46 is glycosylated ((Microbial infection) O-linked (Glc) threonine; by P.sordellii toxin TcsL). Phosphoserine; by AURKA is present on Ser194. Cys203 carries the post-translational modification Cysteine methyl ester. The S-geranylgeranyl cysteine moiety is linked to residue Cys203. Positions 204-206 are cleaved as a propeptide — removed in mature form; it reads CIL.

The protein belongs to the small GTPase superfamily. Ras family. In terms of assembly, interacts (via effector domain) with RALBP1; during mitosis, recruits RALBP1 to the mitochondrion where it promotes DNM1L phosphorylation and mitochondrial fission. Interacts with EXOC2/Sec5 and EXOC8/Exo84; binding to EXOC2 and EXOC8 is mutually exclusive. Interacts with Clostridium exoenzyme C3. Interacts with RALGPS1. Interacts with LPAR1 and LPAR2. Interacts with GRK2 in response to LPAR1 activation. RALA and GRK2 binding to LPAR1 is mutually exclusive. Interacts with CDC42. Post-translationally, phosphorylated. Phosphorylation at Ser-194 by AURKA/Aurora kinase A, during mitosis, induces RALA localization to the mitochondrion where it regulates mitochondrial fission. In terms of processing, prenylation is essential for membrane localization. The geranylgeranylated form and the farnesylated mutant do not undergo alternative prenylation in response to geranylgeranyltransferase I inhibitors (GGTIs) and farnesyltransferase I inhibitors (FTIs). (Microbial infection) Glucosylated at Thr-46 by P.sordellii toxin TcsL from strain 6018. Monoglucosylation completely prevents the recognition of the downstream effector, blocking the GTPases in their inactive form. Not glucosylated by TcsL from strain VPI 9048.

Its subcellular location is the cell membrane. It is found in the cleavage furrow. The protein resides in the midbody. It localises to the midbody ring. The protein localises to the mitochondrion. The catalysed reaction is GTP + H2O = GDP + phosphate + H(+). With respect to regulation, alternates between an inactive form bound to GDP and an active form bound to GTP. Activated by a guanine nucleotide-exchange factor (GEF) and inactivated by a GTPase-activating protein (GAP). Functionally, multifunctional GTPase involved in a variety of cellular processes including gene expression, cell migration, cell proliferation, oncogenic transformation and membrane trafficking. Accomplishes its multiple functions by interacting with distinct downstream effectors. Acts as a GTP sensor for GTP-dependent exocytosis of dense core vesicles. The RALA-exocyst complex regulates integrin-dependent membrane raft exocytosis and growth signaling. Key regulator of LPAR1 signaling and competes with GRK2 for binding to LPAR1 thus affecting the signaling properties of the receptor. Required for anchorage-independent proliferation of transformed cells. During mitosis, supports the stabilization and elongation of the intracellular bridge between dividing cells. Cooperates with EXOC2 to recruit other components of the exocyst to the early midbody. During mitosis, also controls mitochondrial fission by recruiting to the mitochondrion RALBP1, which mediates the phosphorylation and activation of DNM1L by the mitotic kinase cyclin B-CDK1. The chain is Ras-related protein Ral-A (RALA) from Homo sapiens (Human).